The chain runs to 234 residues: Endonuclease V (234 aa).

Mg(2+) is bound by residues D36 and D104.

It belongs to the endonuclease V family. It depends on Mg(2+) as a cofactor.

It localises to the cytoplasm. The catalysed reaction is Endonucleolytic cleavage at apurinic or apyrimidinic sites to products with a 5'-phosphate.. Functionally, DNA repair enzyme involved in the repair of deaminated bases. Selectively cleaves double-stranded DNA at the second phosphodiester bond 3' to a deoxyinosine leaving behind the intact lesion on the nicked DNA. This is Endonuclease V from Yersinia enterocolitica serotype O:8 / biotype 1B (strain NCTC 13174 / 8081).